A 237-amino-acid chain; its full sequence is Eukaryotic translation initiation factor 3 subunit K (237 aa).

The region spanning 44–219 (CDCNANRALL…EARKAEIRED (176 aa)) is the PCI domain.

Belongs to the eIF-3 subunit K family. As to quaternary structure, component of the eukaryotic translation initiation factor 3 (eIF-3) complex.

The protein localises to the cytoplasm. Its function is as follows. Component of the eukaryotic translation initiation factor 3 (eIF-3) complex, which is involved in protein synthesis of a specialized repertoire of mRNAs and, together with other initiation factors, stimulates binding of mRNA and methionyl-tRNAi to the 40S ribosome. The eIF-3 complex specifically targets and initiates translation of a subset of mRNAs involved in cell proliferation. In Neurospora crassa (strain ATCC 24698 / 74-OR23-1A / CBS 708.71 / DSM 1257 / FGSC 987), this protein is Eukaryotic translation initiation factor 3 subunit K.